A 501-amino-acid polypeptide reads, in one-letter code: Glycerol kinase (501 aa).

Position 11 (threonine 11) interacts with ADP. The ATP site is built by threonine 11, threonine 12, and serine 13. A sn-glycerol 3-phosphate-binding site is contributed by threonine 11. Residue arginine 15 coordinates ADP. Residues arginine 81, glutamate 82, tyrosine 133, and aspartate 242 each coordinate sn-glycerol 3-phosphate. Residues arginine 81, glutamate 82, tyrosine 133, aspartate 242, and glutamine 243 each coordinate glycerol. The ADP site is built by threonine 264 and glycine 307. ATP-binding residues include threonine 264, glycine 307, glutamine 311, and glycine 409. Residues glycine 409 and asparagine 413 each contribute to the ADP site.

This sequence belongs to the FGGY kinase family.

The catalysed reaction is glycerol + ATP = sn-glycerol 3-phosphate + ADP + H(+). Its pathway is polyol metabolism; glycerol degradation via glycerol kinase pathway; sn-glycerol 3-phosphate from glycerol: step 1/1. With respect to regulation, inhibited by fructose 1,6-bisphosphate (FBP). In terms of biological role, key enzyme in the regulation of glycerol uptake and metabolism. Catalyzes the phosphorylation of glycerol to yield sn-glycerol 3-phosphate. The protein is Glycerol kinase of Borreliella afzelii (strain PKo) (Borrelia afzelii).